Consider the following 281-residue polypeptide: Bifunctional protein FolD (281 aa).

NADP(+) contacts are provided by residues 165-167 (GRS) and S190.

This sequence belongs to the tetrahydrofolate dehydrogenase/cyclohydrolase family. As to quaternary structure, homodimer.

The catalysed reaction is (6R)-5,10-methylene-5,6,7,8-tetrahydrofolate + NADP(+) = (6R)-5,10-methenyltetrahydrofolate + NADPH. It catalyses the reaction (6R)-5,10-methenyltetrahydrofolate + H2O = (6R)-10-formyltetrahydrofolate + H(+). Its pathway is one-carbon metabolism; tetrahydrofolate interconversion. Functionally, catalyzes the oxidation of 5,10-methylenetetrahydrofolate to 5,10-methenyltetrahydrofolate and then the hydrolysis of 5,10-methenyltetrahydrofolate to 10-formyltetrahydrofolate. The polypeptide is Bifunctional protein FolD (Polaromonas sp. (strain JS666 / ATCC BAA-500)).